A 354-amino-acid chain; its full sequence is Uroporphyrinogen decarboxylase (354 aa).

Residues 27 to 31 (RQAGR), aspartate 77, tyrosine 154, threonine 209, and histidine 327 contribute to the substrate site.

This sequence belongs to the uroporphyrinogen decarboxylase family. Homodimer.

The protein resides in the cytoplasm. It carries out the reaction uroporphyrinogen III + 4 H(+) = coproporphyrinogen III + 4 CO2. It participates in porphyrin-containing compound metabolism; protoporphyrin-IX biosynthesis; coproporphyrinogen-III from 5-aminolevulinate: step 4/4. Its function is as follows. Catalyzes the decarboxylation of four acetate groups of uroporphyrinogen-III to yield coproporphyrinogen-III. This is Uroporphyrinogen decarboxylase from Salmonella paratyphi A (strain ATCC 9150 / SARB42).